Reading from the N-terminus, the 566-residue chain is Bacillolysin (566 aa).

Residues 1 to 27 (MKKKSLALVLATGMAVTTFGGTGSAFA) form the signal peptide. Positions 28 to 249 (DSKNVLSTKK…KQDAKAVVKP (222 aa)) are cleaved as a propeptide — activation peptide. Ca(2+)-binding residues include Asp-307, Asp-309, Val-311, and Asp-388. His-392 is a binding site for Zn(2+). Glu-393 is an active-site residue. Zn(2+) is bound by residues His-396 and Glu-416. Residues Glu-427, Asn-433, Asp-435, Glu-437, Glu-440, Tyr-443, Thr-444, Lys-447, and Asp-450 each contribute to the Ca(2+) site. His-481 acts as the Proton donor in catalysis.

Belongs to the peptidase M4 family. Requires Ca(2+) as cofactor. Zn(2+) serves as cofactor.

The protein localises to the secreted. The catalysed reaction is Similar, but not identical, to that of thermolysin.. Its function is as follows. Extracellular zinc metalloprotease. This is Bacillolysin (npr) from Bacillus cereus.